The chain runs to 273 residues: Putative pyruvate, phosphate dikinase regulatory protein (273 aa).

Residue 149–156 (GPSRTSKT) coordinates ADP.

Belongs to the pyruvate, phosphate/water dikinase regulatory protein family. PDRP subfamily.

It carries out the reaction N(tele)-phospho-L-histidyl/L-threonyl-[pyruvate, phosphate dikinase] + ADP = N(tele)-phospho-L-histidyl/O-phospho-L-threonyl-[pyruvate, phosphate dikinase] + AMP + H(+). The catalysed reaction is N(tele)-phospho-L-histidyl/O-phospho-L-threonyl-[pyruvate, phosphate dikinase] + phosphate + H(+) = N(tele)-phospho-L-histidyl/L-threonyl-[pyruvate, phosphate dikinase] + diphosphate. Bifunctional serine/threonine kinase and phosphorylase involved in the regulation of the pyruvate, phosphate dikinase (PPDK) by catalyzing its phosphorylation/dephosphorylation. This chain is Putative pyruvate, phosphate dikinase regulatory protein, found in Rickettsia massiliae (strain Mtu5).